A 307-amino-acid polypeptide reads, in one-letter code: UDP-N-acetylenolpyruvoylglucosamine reductase (307 aa).

The region spanning 33 to 198 (KVGGPADIFV…LNATFALQKG (166 aa)) is the FAD-binding PCMH-type domain. Residue arginine 177 is part of the active site. Serine 227 (proton donor) is an active-site residue. Glutamate 297 is an active-site residue.

It belongs to the MurB family. It depends on FAD as a cofactor.

It localises to the cytoplasm. It carries out the reaction UDP-N-acetyl-alpha-D-muramate + NADP(+) = UDP-N-acetyl-3-O-(1-carboxyvinyl)-alpha-D-glucosamine + NADPH + H(+). It participates in cell wall biogenesis; peptidoglycan biosynthesis. Functionally, cell wall formation. The chain is UDP-N-acetylenolpyruvoylglucosamine reductase from Clostridium novyi (strain NT).